The chain runs to 387 residues: ERBB-3 BINDING PROTEIN 1 (387 aa).

Necessary for nucleolar localization stretches follow at residues 1–49 (MSDD…IVDL) and 297–387 (LLQP…PMEG). The segment at 47–55 (VDLCEKGDA) is RNA-binding. The segment at 337–387 (LQPTKTTENEPEIKAWLALPTKTKKKGGGKKKKGKKGDKVEEASQAEPMEG) is disordered. An interaction with RNA region spans residues 356–373 (PTKTKKKGGGKKKKGKKG). Residues 358 to 372 (KTKKKGGGKKKKGKK) are compositionally biased toward basic residues. Positions 360–369 (KKKGGGKKKK) match the Nuclear localization signal motif.

This sequence belongs to the peptidase M24 family. In terms of assembly, component of a ribonucleoprotein complex. In terms of tissue distribution, expressed during tuberisation and in roots, nodes, internodes, petioles, leaves, stolons, tubers and sprouts.

It localises to the nucleus. Its function is as follows. Binds RNA. Associates with 28S, 18S and 5.8S mature rRNAs, several rRNA precursors and probably U3 small nucleolar RNA. May be involved in regulation of intermediate and late steps of rRNA processing. May be involved in ribosome assembly. Required for expression of cell cycle genes such as CYCD3-1, RNR2A and CDKB1-1. Promotes, in a dose- and auxin-dependent manner, organ growth by stimulating both cell proliferation and expansion, via the regulation of RBR1 levels. The polypeptide is ERBB-3 BINDING PROTEIN 1 (Solanum tuberosum (Potato)).